Reading from the N-terminus, the 469-residue chain is tRNA modification GTPase MnmE (469 aa).

(6S)-5-formyl-5,6,7,8-tetrahydrofolate contacts are provided by Arg-26, Glu-88, and Arg-127. Residues Gly-222 to Gln-390 enclose the TrmE-type G domain. A K(+)-binding site is contributed by Asn-232. Residues Asn-232–Ser-237, Thr-251–Thr-257, Asp-276–Gly-279, and Asn-344–Asp-347 contribute to the GTP site. Ser-236 contacts Mg(2+). 3 residues coordinate K(+): Thr-251, Leu-253, and Thr-256. Residue Thr-257 coordinates Mg(2+). Residue Lys-469 coordinates (6S)-5-formyl-5,6,7,8-tetrahydrofolate.

It belongs to the TRAFAC class TrmE-Era-EngA-EngB-Septin-like GTPase superfamily. TrmE GTPase family. In terms of assembly, homodimer. Heterotetramer of two MnmE and two MnmG subunits. The cofactor is K(+).

It localises to the cytoplasm. Its function is as follows. Exhibits a very high intrinsic GTPase hydrolysis rate. Involved in the addition of a carboxymethylaminomethyl (cmnm) group at the wobble position (U34) of certain tRNAs, forming tRNA-cmnm(5)s(2)U34. The sequence is that of tRNA modification GTPase MnmE from Synechococcus elongatus.